Reading from the N-terminus, the 249-residue chain is Elongator complex protein 6 homolog (249 aa).

Belongs to the ELP6 family. As to quaternary structure, component of the elongator complex.

The protein localises to the cytoplasm. Its subcellular location is the nucleus. The protein operates within tRNA modification; 5-methoxycarbonylmethyl-2-thiouridine-tRNA biosynthesis. Component of the elongator complex which is required for multiple tRNA modifications, including mcm5U (5-methoxycarbonylmethyl uridine), mcm5s2U (5-methoxycarbonylmethyl-2-thiouridine), and ncm5U (5-carbamoylmethyl uridine). The elongator complex catalyzes formation of carboxymethyluridine in the wobble base at position 34 in tRNAs. The polypeptide is Elongator complex protein 6 homolog (Schizosaccharomyces pombe (strain 972 / ATCC 24843) (Fission yeast)).